The sequence spans 363 residues: MAP kinase kinase skh1/pek1 (363 aa).

Positions Ile-79–Val-343 constitute a Protein kinase domain. ATP is bound by residues Leu-85–Val-93 and Lys-108. Asp-206 serves as the catalytic Proton acceptor. Position 234 is a phosphoserine (Ser-234). Phosphothreonine is present on Thr-238.

The protein belongs to the protein kinase superfamily. STE Ser/Thr protein kinase family. MAP kinase kinase subfamily.

The enzyme catalyses L-seryl-[protein] + ATP = O-phospho-L-seryl-[protein] + ADP + H(+). It carries out the reaction L-threonyl-[protein] + ATP = O-phospho-L-threonyl-[protein] + ADP + H(+). The catalysed reaction is L-tyrosyl-[protein] + ATP = O-phospho-L-tyrosyl-[protein] + ADP + H(+). Its activity is regulated as follows. Activated by mkh1. Involved in the mkh1 signal transduction pathway that plays a role in cell wall integrity. Activates spm1/pmk1 via phosphorylation. The chain is MAP kinase kinase skh1/pek1 (skh1) from Schizosaccharomyces pombe (strain 972 / ATCC 24843) (Fission yeast).